The following is a 765-amino-acid chain: E3 ubiquitin-protein ligase SMURF2 (765 aa).

Residues 1 to 117 (MSNQGVRRNG…KDTGYQRLDL (117 aa)) form the C2 domain. 3 consecutive WW domains span residues 157–190 (NDLPDGWEERRTASGRIQYLNHITRSTQWERPTR), 251–284 (PDLPEGYEQRTTQQGQVYFLHTQTGVSTWHDPRV), and 297–330 (GPLPPGWEIRNTATGRVYFVDHNNRTTQFTDPRL). Positions 341-375 (SPNGSRAAVEAQSSSRPGQLKEQAQSVVSPGNLPE) are disordered. Over residues 351–369 (AQSSSRPGQLKEQAQSVVS) the composition is skewed to polar residues. Residues 431–765 (RPKDLWKRLM…IEETCGFAVE (335 aa)) enclose the HECT domain. Residue Cys733 is the Glycyl thioester intermediate of the active site.

It localises to the nucleus. Its subcellular location is the cytoplasm. The protein resides in the cell membrane. The protein localises to the membrane raft. It catalyses the reaction S-ubiquitinyl-[E2 ubiquitin-conjugating enzyme]-L-cysteine + [acceptor protein]-L-lysine = [E2 ubiquitin-conjugating enzyme]-L-cysteine + N(6)-ubiquitinyl-[acceptor protein]-L-lysine.. The protein operates within protein modification; protein ubiquitination. In terms of biological role, E3 ubiquitin-protein ligase which accepts ubiquitin from an E2 ubiquitin-conjugating enzyme in the form of a thioester and then directly transfers the ubiquitin to targeted substrates. The protein is E3 ubiquitin-protein ligase SMURF2 (smurf2) of Danio rerio (Zebrafish).